The chain runs to 273 residues: Eukaryotic translation initiation factor 3 subunit G-2 (273 aa).

Positions 193–271 constitute an RRM domain; it reads SAVRISNLSE…LILCVEWSKP (79 aa).

It belongs to the eIF-3 subunit G family. In terms of assembly, component of the eukaryotic translation initiation factor 3 (eIF-3) complex. The eIF-3 complex interacts with pix.

Its subcellular location is the cytoplasm. Functionally, RNA-binding component of the eukaryotic translation initiation factor 3 (eIF-3) complex, which is involved in protein synthesis of a specialized repertoire of mRNAs and, together with other initiation factors, stimulates binding of mRNA and methionyl-tRNAi to the 40S ribosome. The eIF-3 complex specifically targets and initiates translation of a subset of mRNAs involved in cell proliferation. This subunit can bind 18S rRNA. The protein is Eukaryotic translation initiation factor 3 subunit G-2 of Drosophila simulans (Fruit fly).